The primary structure comprises 300 residues: Succinate--CoA ligase [ADP-forming] subunit alpha (300 aa).

Residues 17-20, Lys-43, and 96-98 contribute to the CoA site; these read TGST and ITE. Tyr-159 serves as a coordination point for substrate. Catalysis depends on His-247, which acts as the Tele-phosphohistidine intermediate.

This sequence belongs to the succinate/malate CoA ligase alpha subunit family. As to quaternary structure, heterotetramer of two alpha and two beta subunits.

It catalyses the reaction succinate + ATP + CoA = succinyl-CoA + ADP + phosphate. The catalysed reaction is GTP + succinate + CoA = succinyl-CoA + GDP + phosphate. Its pathway is carbohydrate metabolism; tricarboxylic acid cycle; succinate from succinyl-CoA (ligase route): step 1/1. Succinyl-CoA synthetase functions in the citric acid cycle (TCA), coupling the hydrolysis of succinyl-CoA to the synthesis of either ATP or GTP and thus represents the only step of substrate-level phosphorylation in the TCA. The alpha subunit of the enzyme binds the substrates coenzyme A and phosphate, while succinate binding and nucleotide specificity is provided by the beta subunit. The chain is Succinate--CoA ligase [ADP-forming] subunit alpha from Bacillus subtilis (strain 168).